A 174-amino-acid polypeptide reads, in one-letter code: Austinoid biosynthesis clusters protein H (174 aa).

Belongs to the trt14 isomerase family. Homodimer.

The protein operates within secondary metabolite biosynthesis; terpenoid biosynthesis. Part of the gene cluster B that mediates the biosynthesis of austinol and dehydroaustinol, two fungal meroterpenoids. The first step of the pathway is the synthesis of 3,5-dimethylorsellinic acid by the polyketide synthase ausA. 3,5-dimethylorsellinic acid is then prenylated by the polyprenyl transferase ausN. Further epoxidation by the FAD-dependent monooxygenase ausM and cyclization by the probable terpene cyclase ausL lead to the formation of protoaustinoid A. Protoaustinoid A is then oxidized to spiro-lactone preaustinoid A3 by the combined action of the FAD-binding monooxygenases ausB and ausC, and the dioxygenase ausE. Acid-catalyzed keto-rearrangement and ring contraction of the tetraketide portion of preaustinoid A3 by ausJ lead to the formation of preaustinoid A4. The aldo-keto reductase ausK, with the help of ausH, is involved in the next step by transforming preaustinoid A4 into isoaustinone which is in turn hydroxylated by the P450 monooxygenase ausI to form austinolide. Finally, the cytochrome P450 monooxygenase ausG modifies austinolide to austinol. Austinol can be further modified to dehydroaustinol which forms a diffusible complex with diorcinol that initiates conidiation. Due to genetic rearrangements of the clusters and the subsequent loss of some enzymes, the end products of the Emericella nidulans austinoid biosynthesis clusters are austinol and dehydroaustinol, even if additional enzymes, such as the O-acetyltransferase ausQ and the cytochrome P450 monooxygenase ausR are still functional. The protein is Austinoid biosynthesis clusters protein H of Emericella nidulans (strain FGSC A4 / ATCC 38163 / CBS 112.46 / NRRL 194 / M139) (Aspergillus nidulans).